We begin with the raw amino-acid sequence, 320 residues long: Lipoyl synthase (320 aa).

A disordered region spans residues 9–31; that stretch reads ANDARPRHPEKAHRPDQPIQRKP. Residues 12–31 are compositionally biased toward basic and acidic residues; sequence ARPRHPEKAHRPDQPIQRKP. [4Fe-4S] cluster contacts are provided by Cys-60, Cys-65, Cys-71, Cys-86, Cys-90, Cys-93, and Ser-299. In terms of domain architecture, Radical SAM core spans 72 to 288; it reads WEKKHATFMI…ETTAYAKGFL (217 aa).

It belongs to the radical SAM superfamily. Lipoyl synthase family. [4Fe-4S] cluster is required as a cofactor.

Its subcellular location is the cytoplasm. The enzyme catalyses [[Fe-S] cluster scaffold protein carrying a second [4Fe-4S](2+) cluster] + N(6)-octanoyl-L-lysyl-[protein] + 2 oxidized [2Fe-2S]-[ferredoxin] + 2 S-adenosyl-L-methionine + 4 H(+) = [[Fe-S] cluster scaffold protein] + N(6)-[(R)-dihydrolipoyl]-L-lysyl-[protein] + 4 Fe(3+) + 2 hydrogen sulfide + 2 5'-deoxyadenosine + 2 L-methionine + 2 reduced [2Fe-2S]-[ferredoxin]. It functions in the pathway protein modification; protein lipoylation via endogenous pathway; protein N(6)-(lipoyl)lysine from octanoyl-[acyl-carrier-protein]: step 2/2. Catalyzes the radical-mediated insertion of two sulfur atoms into the C-6 and C-8 positions of the octanoyl moiety bound to the lipoyl domains of lipoate-dependent enzymes, thereby converting the octanoylated domains into lipoylated derivatives. The protein is Lipoyl synthase of Methylobacterium nodulans (strain LMG 21967 / CNCM I-2342 / ORS 2060).